A 507-amino-acid polypeptide reads, in one-letter code: ATP synthase subunit alpha, chloroplastic (507 aa).

170–177 (GDRQTGKT) serves as a coordination point for ATP. T257 carries the phosphothreonine modification.

This sequence belongs to the ATPase alpha/beta chains family. In terms of assembly, F-type ATPases have 2 components, CF(1) - the catalytic core - and CF(0) - the membrane proton channel. CF(1) has five subunits: alpha(3), beta(3), gamma(1), delta(1), epsilon(1). CF(0) has four main subunits: a, b, b' and c.

The protein localises to the plastid. Its subcellular location is the chloroplast thylakoid membrane. It carries out the reaction ATP + H2O + 4 H(+)(in) = ADP + phosphate + 5 H(+)(out). Its function is as follows. Produces ATP from ADP in the presence of a proton gradient across the membrane. The alpha chain is a regulatory subunit. The sequence is that of ATP synthase subunit alpha, chloroplastic from Lobularia maritima (Sweet alyssum).